We begin with the raw amino-acid sequence, 63 residues long: Prokaryotic ubiquitin-like protein Pup (63 aa).

A disordered region spans residues 1–35; the sequence is MSGQQSQINAGGGNGQGGDTPEFDAGQVSINSAGT. The interval 19–57 is ARC ATPase binding; it reads DTPEFDAGQVSINSAGTDDLLDEIDGLLESNAEEFVRSY. E63 participates in a covalent cross-link: Isoglutamyl lysine isopeptide (Glu-Lys) (interchain with K-? in acceptor proteins).

Belongs to the prokaryotic ubiquitin-like protein family. In terms of assembly, strongly interacts with the proteasome-associated ATPase ARC through a hydrophobic interface; the interacting region of Pup lies in its C-terminal half. There is one Pup binding site per ARC hexamer ring.

The protein operates within protein degradation; proteasomal Pup-dependent pathway. Functionally, protein modifier that is covalently attached to lysine residues of substrate proteins, thereby targeting them for proteasomal degradation. The tagging system is termed pupylation. The protein is Prokaryotic ubiquitin-like protein Pup of Corynebacterium aurimucosum (strain ATCC 700975 / DSM 44827 / CIP 107346 / CN-1) (Corynebacterium nigricans).